A 288-amino-acid chain; its full sequence is ATP synthase subunit a (288 aa).

A run of 6 helical transmembrane segments spans residues 47-67 (LDSMLWSIGLGIVFCALFWLV), 104-124 (LIAPLALTIFVWIFLMNLMDL), 157-177 (DPNITLGMSFSVFALIIYYSI), 199-219 (PIAKIILIPINFILEFVTLIA), 237-257 (LIFVLIALMPFWIQWALSVPW), and 258-278 (AIFHILIITLQAFVFMMLTIV).

Belongs to the ATPase A chain family. In terms of assembly, F-type ATPases have 2 components, CF(1) - the catalytic core - and CF(0) - the membrane proton channel. CF(1) has five subunits: alpha(3), beta(3), gamma(1), delta(1), epsilon(1). CF(0) has three main subunits: a(1), b(2) and c(9-12). The alpha and beta chains form an alternating ring which encloses part of the gamma chain. CF(1) is attached to CF(0) by a central stalk formed by the gamma and epsilon chains, while a peripheral stalk is formed by the delta and b chains.

It localises to the cell inner membrane. Functionally, key component of the proton channel; it plays a direct role in the translocation of protons across the membrane. This Psychrobacter sp. (strain PRwf-1) protein is ATP synthase subunit a.